Reading from the N-terminus, the 289-residue chain is 4-hydroxy-3-methylbut-2-enyl diphosphate reductase (289 aa).

Cysteine 13 lines the [4Fe-4S] cluster pocket. Residues histidine 42 and histidine 76 each contribute to the (2E)-4-hydroxy-3-methylbut-2-enyl diphosphate site. Residues histidine 42 and histidine 76 each coordinate dimethylallyl diphosphate. Isopentenyl diphosphate is bound by residues histidine 42 and histidine 76. Residue cysteine 98 participates in [4Fe-4S] cluster binding. Residue histidine 130 coordinates (2E)-4-hydroxy-3-methylbut-2-enyl diphosphate. Histidine 130 lines the dimethylallyl diphosphate pocket. Histidine 130 serves as a coordination point for isopentenyl diphosphate. The active-site Proton donor is glutamate 132. Residue threonine 168 coordinates (2E)-4-hydroxy-3-methylbut-2-enyl diphosphate. A [4Fe-4S] cluster-binding site is contributed by cysteine 199. Positions 227, 228, 229, and 272 each coordinate (2E)-4-hydroxy-3-methylbut-2-enyl diphosphate. 4 residues coordinate dimethylallyl diphosphate: serine 227, serine 228, asparagine 229, and serine 272. Residues serine 227, serine 228, asparagine 229, and serine 272 each contribute to the isopentenyl diphosphate site.

This sequence belongs to the IspH family. [4Fe-4S] cluster serves as cofactor.

The enzyme catalyses isopentenyl diphosphate + 2 oxidized [2Fe-2S]-[ferredoxin] + H2O = (2E)-4-hydroxy-3-methylbut-2-enyl diphosphate + 2 reduced [2Fe-2S]-[ferredoxin] + 2 H(+). It carries out the reaction dimethylallyl diphosphate + 2 oxidized [2Fe-2S]-[ferredoxin] + H2O = (2E)-4-hydroxy-3-methylbut-2-enyl diphosphate + 2 reduced [2Fe-2S]-[ferredoxin] + 2 H(+). The protein operates within isoprenoid biosynthesis; dimethylallyl diphosphate biosynthesis; dimethylallyl diphosphate from (2E)-4-hydroxy-3-methylbutenyl diphosphate: step 1/1. Its pathway is isoprenoid biosynthesis; isopentenyl diphosphate biosynthesis via DXP pathway; isopentenyl diphosphate from 1-deoxy-D-xylulose 5-phosphate: step 6/6. Its function is as follows. Catalyzes the conversion of 1-hydroxy-2-methyl-2-(E)-butenyl 4-diphosphate (HMBPP) into a mixture of isopentenyl diphosphate (IPP) and dimethylallyl diphosphate (DMAPP). Acts in the terminal step of the DOXP/MEP pathway for isoprenoid precursor biosynthesis. In Porphyromonas gingivalis (strain ATCC BAA-308 / W83), this protein is 4-hydroxy-3-methylbut-2-enyl diphosphate reductase.